Here is a 265-residue protein sequence, read N- to C-terminus: Uroporphyrinogen-III synthase (265 aa).

This sequence belongs to the uroporphyrinogen-III synthase family. Monomer.

The protein resides in the cytoplasm. It localises to the cytosol. It carries out the reaction hydroxymethylbilane = uroporphyrinogen III + H2O. Its pathway is porphyrin-containing compound metabolism; protoporphyrin-IX biosynthesis; coproporphyrinogen-III from 5-aminolevulinate: step 3/4. Its function is as follows. Catalyzes cyclization of the linear tetrapyrrole, hydroxymethylbilane, to the macrocyclic uroporphyrinogen III, the branch point for the various sub-pathways leading to the wide diversity of porphyrins. Porphyrins act as cofactors for a multitude of enzymes that perform a variety of processes within the cell such as methionine synthesis (vitamin B12) or oxygen transport (heme). In Mus musculus (Mouse), this protein is Uroporphyrinogen-III synthase (Uros).